The sequence spans 259 residues: Type III pantothenate kinase (259 aa).

6-13 (DVGNTNIV) contacts ATP. Residues tyrosine 100 and 107-110 (GADR) contribute to the substrate site. The Proton acceptor role is filled by aspartate 109. Residue aspartate 129 participates in K(+) binding. Position 132 (threonine 132) interacts with ATP. Substrate is bound at residue threonine 184.

This sequence belongs to the type III pantothenate kinase family. Homodimer. NH4(+) serves as cofactor. It depends on K(+) as a cofactor.

The protein resides in the cytoplasm. It carries out the reaction (R)-pantothenate + ATP = (R)-4'-phosphopantothenate + ADP + H(+). It functions in the pathway cofactor biosynthesis; coenzyme A biosynthesis; CoA from (R)-pantothenate: step 1/5. In terms of biological role, catalyzes the phosphorylation of pantothenate (Pan), the first step in CoA biosynthesis. The sequence is that of Type III pantothenate kinase from Clostridium perfringens (strain ATCC 13124 / DSM 756 / JCM 1290 / NCIMB 6125 / NCTC 8237 / Type A).